Consider the following 304-residue polypeptide: tRNA dimethylallyltransferase (304 aa).

2 to 9 contacts ATP; that stretch reads GPTASGKT. Substrate is bound at residue 4-9; the sequence is TASGKT. Interaction with substrate tRNA stretches follow at residues 27–30, 151–155, 232–237, and 265–272; these read DSAL, QRINR, RCVGYR, and KRQITWLR.

It belongs to the IPP transferase family. In terms of assembly, monomer. It depends on Mg(2+) as a cofactor.

It catalyses the reaction adenosine(37) in tRNA + dimethylallyl diphosphate = N(6)-dimethylallyladenosine(37) in tRNA + diphosphate. Its function is as follows. Catalyzes the transfer of a dimethylallyl group onto the adenine at position 37 in tRNAs that read codons beginning with uridine, leading to the formation of N6-(dimethylallyl)adenosine (i(6)A). The chain is tRNA dimethylallyltransferase from Actinobacillus pleuropneumoniae serotype 7 (strain AP76).